The primary structure comprises 620 residues: MLGGGSVDGERDTDDDAAGAVAAPPAIDFPAEVSDPKYDESDVPAELQVFKEPLQQPTFPFLVANQLLLVSLLEHLSHVHEPNPLHSKQVFKLLCQTFIKMGLLSSFTCSDEFSSLRLHHNRAITHLMRSAKERVRQDPCQDNSYMQKIRSREIALEAQTSRYLNEFEELAILGKGGYGRVYKVRNKLDGQHYAIKKILIKSATKTDCMKVLREVKVLAGLQHPNIVGYHTAWIEHVHVLQPQDRVPIQLPSLEVLSEHEGDRNQGGVKDNESSSSIIFAELTPEKENPLAESDVKNENNNLVSYRANLVIRSSSESESSIELQEDGLNESPLRPVVKHQLPLGHSSDVEGNFTSTDESSEDNLNLLGQTEARYHLMLHIQMQLCELSLWDWIAERNNRSRECVDEAACPYVMASVATKIFQELVEGVFYIHNMGIVHRDLKPRNIFLHGPDQQVKIGDFGLACADIIQKSADWTNRNGKGTPTHTSRVGTCLYASPEQLEGSEYDAKSDMYSLGVILLELFQPFGTEMERATVLTGVRTGRIPESLSKRCPVQAKYIQLLTGRNAAQRPSALQLLQSELFQTTGNVNLTLQMKIMEQEKEIEELKKQLSLLSQDKGLKR.

The segment at 1-38 is disordered; it reads MLGGGSVDGERDTDDDAAGAVAAPPAIDFPAEVSDPKY. Positions 18 to 28 are enriched in low complexity; it reads AGAVAAPPAID. The short motif at 85–104 is the SIFI-degron element; that stretch reads LHSKQVFKLLCQTFIKMGLL. Residues 167-581 enclose the Protein kinase domain; the sequence is FEELAILGKG…ALQLLQSELF (415 aa). ATP contacts are provided by residues 173–181 and K196; that span reads LGKGGYGRV. At T283 the chain carries Phosphothreonine. The HRM 1 repeat unit spans residues 408 to 413; it reads ACPYVM. Residue D440 is the Proton acceptor of the active site. Phosphothreonine; by autocatalysis occurs at positions 484 and 486. The residue at position 491 (T491) is a Phosphothreonine. An HRM 2 repeat occupies 550–555; that stretch reads RCPVQA.

This sequence belongs to the protein kinase superfamily. Ser/Thr protein kinase family. GCN2 subfamily. In terms of assembly, synthesized in an inactive form that binds to the N-terminal domain of CDC37. Has to be associated with a multiprotein complex containing Hsp90, CDC37 and PPP5C for maturation and activation by autophosphorylation. The phosphatase PPP5C modulates this activation. Homodimer; homodimerizes in presence of heme, forming a disulfide-linked inactive homodimer. Interacts with DELE1; binds both to full-length DELE1 and processed form of DELE1 (S-DELE1) in response to stress, leading to activate its protein kinase activity and trigger the integrated stress response (ISR). Post-translationally, activated by autophosphorylation; phosphorylated predominantly on serine and threonine residues, but also on tyrosine residues. Autophosphorylation at Thr-486 is required for kinase activation. The active autophosphorylated form apparently is largely refractory to cellular heme fluctuations. Ubiquitinated and degraded by the SIFI complex once the mitochondrial stress has been resolved, thereby providing stress response silencing. Within the SIFI complex, UBR4 initiates ubiquitin chain that are further elongated or branched by KCMF1.

Its subcellular location is the cytoplasm. The enzyme catalyses L-seryl-[protein] + ATP = O-phospho-L-seryl-[protein] + ADP + H(+). The catalysed reaction is L-threonyl-[protein] + ATP = O-phospho-L-threonyl-[protein] + ADP + H(+). In normal conditions, the protein kinase activity is inhibited; inhibition is relieved by various stress conditions. Inhibited by heme: in presence of heme, forms a disulfide-linked inactive homodimer. Heme depletion relieves inhibition and stimulates kinase activity by autophosphorylation. Inhibited by the heme metabolites biliverdin and bilirubin. Induced by oxidative stress generated by arsenite treatment. Binding of nitric oxide (NO) to the heme iron in the N-terminal heme-binding domain activates the kinase activity, while binding of carbon monoxide (CO) suppresses kinase activity. Protein kinase activity is also activated upon binding to DELE1 in response to various stress, triggering the integrated stress response (ISR): activated by full-length DELE1 in response to iron deficiency, while it is activated by the processed form of DELE1 (S-DELE1) in response to mitochondrial stress. Its function is as follows. Metabolic-stress sensing protein kinase that phosphorylates the alpha subunit of eukaryotic translation initiation factor 2 (EIF2S1/eIF-2-alpha) in response to various stress conditions. Key activator of the integrated stress response (ISR) required for adaptation to various stress, such as heme deficiency, oxidative stress, osmotic shock, mitochondrial dysfunction and heat shock. EIF2S1/eIF-2-alpha phosphorylation in response to stress converts EIF2S1/eIF-2-alpha in a global protein synthesis inhibitor, leading to a global attenuation of cap-dependent translation, while concomitantly initiating the preferential translation of ISR-specific mRNAs, such as the transcriptional activator ATF4, and hence allowing ATF4-mediated reprogramming. Acts as a key sensor of heme-deficiency: in normal conditions, binds hemin via a cysteine thiolate and histidine nitrogenous coordination, leading to inhibit the protein kinase activity. This binding occurs with moderate affinity, allowing it to sense the heme concentration within the cell: heme depletion relieves inhibition and stimulates kinase activity, activating the ISR. Thanks to this unique heme-sensing capacity, plays a crucial role to shut off protein synthesis during acute heme-deficient conditions. In red blood cells (RBCs), controls hemoglobin synthesis ensuring a coordinated regulation of the synthesis of its heme and globin moieties. It thereby plays an essential protective role for RBC survival in anemias of iron deficiency. Iron deficiency also triggers activation by full-length DELE1. Also activates the ISR in response to mitochondrial dysfunction: HRI/EIF2AK1 protein kinase activity is activated upon binding to the processed form of DELE1 (S-DELE1), thereby promoting the ATF4-mediated reprogramming. Also acts as an activator of mitophagy in response to mitochondrial damage: catalyzes phosphorylation of eIF-2-alpha (EIF2S1) following activation by S-DELE1, thereby promoting mitochondrial localization of EIF2S1, triggering PRKN-independent mitophagy. The protein is Eukaryotic translation initiation factor 2-alpha kinase 1 of Rattus norvegicus (Rat).